The chain runs to 555 residues: MPAPGDQHSRISNPFEDVKPRVSEYTAQEIATLQTRLERQLGPEYLSARAGPSGQKVHYVAAEKVIGLANEVFGFNGWSSSIQNIQVDFVDEHPQTLKISLGLHVVVRVTLRDGTFHEDIGYGHIENCKGKAMAFEKAKKEGTTDALKRALRNFGNVLGNCVYDKAYLAKVTKLKVEPTKFDELNLHRHADFAKKDVVAEPRLPPVKPEPSNTASAAPHPPLPPLPEADSFDDLLGEFDEADFCVVDADGHPDEVVLPENSHASGSSGNTGASTTNRGPGAPSGNQSNQQRPMQPSSRMNLNGPAGRPQPQTPNHQINRSGPQNGSINNQQNNHGMRPSPHMANQGRPPPPPQNNNNTSNGTGPHQRPLGNGPQQNTPPPNNGAATAPSGAEPVAFFSARAVARVPDDASLPPPPGTATPTALFNPKAESPSIRKTPGIDHSSSRPVSRTGQHVPAKPVQDGGGLANDNPSNNAGNGVQNQPQKPQPSQQRGSILNPQFDQSRRIGAPGGAASPLSNRNQYRPPTMMKRPPLADVPNGTSNGNGTPGDSKRMKLN.

A DNA-binding region spans residues 148 to 152; it reads KRALR. 2 disordered regions span residues 197 to 232 and 251 to 555; these read VVAE…DSFD and HPDE…MKLN. Low complexity predominate over residues 260–276; the sequence is NSHASGSSGNTGASTTN. 2 stretches are compositionally biased toward polar residues: residues 283–300 and 312–334; these read SGNQ…SRMN and TPNH…QNNH. Low complexity-rich tracts occupy residues 354–375 and 382–404; these read NNNN…GPQQ and NGAA…AVAR. The segment covering 468–478 has biased composition (polar residues); sequence DNPSNNAGNGV. Over residues 479–490 the composition is skewed to low complexity; the sequence is QNQPQKPQPSQQ. Polar residues predominate over residues 491-500; it reads RGSILNPQFD. A compositionally biased stretch (low complexity) spans 536-547; it reads PNGTSNGNGTPG.

It belongs to the RAD52 family. In terms of assembly, part of a complex that includes RAD51, RAD52 and RAD59.

Its subcellular location is the nucleus. In terms of biological role, involved in DNA double-strand break (DSB) repair and recombination. Promotes the annealing of complementary single-stranded DNA and by stimulation of the RAD51 recombinase. The chain is DNA repair and recombination protein rhm52 (RHM52) from Pyricularia oryzae (strain 70-15 / ATCC MYA-4617 / FGSC 8958) (Rice blast fungus).